Here is a 64-residue protein sequence, read N- to C-terminus: Large ribosomal subunit protein bL33c (64 aa).

Belongs to the bacterial ribosomal protein bL33 family.

The protein localises to the plastid. It is found in the chloroplast. The polypeptide is Large ribosomal subunit protein bL33c (rpl33) (Mesostigma viride (Green alga)).